The chain runs to 289 residues: Rhodopsin (289 aa).

The Extracellular segment spans residues 1–7 (YLVNPAA). The chain crosses the membrane as a helical span at residues 8–32 (YAALGAYMFLLILIGFPINFLTLYV). Topologically, residues 33 to 44 (TLEHKKLRTPLN) are cytoplasmic. Residues 45–67 (YILLNLAVGNLFMVLGGFTTTMY) traverse the membrane as a helical segment. Residues 68–81 (TSMHGYFVLGRLGC) are Extracellular-facing. Cysteine 81 and cysteine 158 are oxidised to a cystine. The chain crosses the membrane as a helical span at residues 82-104 (NLEGFFATLGGEIALWSLVVLAI). The 'Ionic lock' involved in activated form stabilization signature appears at 105–107 (ERW). Residues 105–123 (ERWIVVCKPISKFRFTEDH) are Cytoplasmic-facing. Residues 124 to 144 (AIMGLAFSWVMGLACAVPPLV) traverse the membrane as a helical segment. Residues 145–173 (GWSRYIPEGMKCSCGVDYYTRAEGFNNES) are Extracellular-facing. Asparagine 171 carries N-linked (GlcNAc...) asparagine glycosylation. A helical membrane pass occupies residues 174–195 (FVIYMFIVHFLIPLSVIFFCYG). The Cytoplasmic segment spans residues 196-223 (RLLCAVKEAAAAQQESETTQRAEKEVSR). The chain crosses the membrane as a helical span at residues 224–245 (MVVIMVIGFLVCWLPYASVAWW). Topologically, residues 246-257 (IFCNQGSDFGPI) are extracellular. The chain crosses the membrane as a helical span at residues 258–279 (FMTLPSFFAKRPAIYNPMIYIC). Residue lysine 267 is modified to N6-(retinylidene)lysine. At 280–289 (MNKQFRHCMI) the chain is on the cytoplasmic side.

This sequence belongs to the G-protein coupled receptor 1 family. Opsin subfamily. Phosphorylated on some or all of the serine and threonine residues present in the C-terminal region. In terms of processing, contains one covalently linked retinal chromophore.

It is found in the membrane. It localises to the cell projection. Its subcellular location is the cilium. The protein resides in the photoreceptor outer segment. Its function is as follows. Photoreceptor required for image-forming vision at low light intensity. While most salt water fish species use retinal as chromophore, most freshwater fish use 3-dehydroretinal, or a mixture of retinal and 3-dehydroretinal. Light-induced isomerization of 11-cis to all-trans retinal triggers a conformational change that activates signaling via G-proteins. Subsequent receptor phosphorylation mediates displacement of the bound G-protein alpha subunit by arrestin and terminates signaling. The sequence is that of Rhodopsin (rho) from Cottinella boulengeri (Short-headed sculpin).